A 281-amino-acid chain; its full sequence is Carbonic anhydrase (281 aa).

Zn(2+)-binding residues include C106, H161, and C164.

Belongs to the beta-class carbonic anhydrase family. It depends on Zn(2+) as a cofactor.

The protein localises to the cytoplasm. The protein resides in the nucleus. It is found in the mitochondrion intermembrane space. It catalyses the reaction hydrogencarbonate + H(+) = CO2 + H2O. With respect to regulation, amines and amino acids act as activators of catalytic activity, whereas natural product-based phenols, dithiocarbamates, aliphatic and aromatic carboxylates, boronic acids, and sulfonamides act as inhibitors of enzymatic activity. Also inhibited by anions such as cyanide and carbonate, and to a lesser extent by sulfate, phenylboronic, and phenyl arsonic acid. Its function is as follows. Catalyzes the reversible hydration of CO(2) to H(2)CO(3). The main role may be to provide inorganic carbon for the bicarbonate-dependent carboxylation reactions catalyzed by pyruvate carboxylase, acetyl-CoA carboxylase and carbamoyl-phosphate synthetase. Involved in protection against oxidative damage. Acts as a CO(2) chemosensor and induces CO(2)-mediated filamentation. Essential for pathological growth in niches where sufficient CO(2) is not supplied by the host. Necessary for white-to-opaque switching at low CO(2) concentrations. This is Carbonic anhydrase (NCE103) from Candida albicans (strain SC5314 / ATCC MYA-2876) (Yeast).